Consider the following 289-residue polypeptide: Fatty acid elongase 3-like (289 aa).

The next 7 membrane-spanning stretches (helical) occupy residues 35 to 55 (SFLF…HILL), 75 to 95 (SLLM…SAAA), 129 to 149 (VFFW…RTIF), 157 to 176 (LAVS…FLWL), 181 to 203 (SYQI…YRFW), 205 to 225 (GFGL…LVLV), and 248 to 268 (IGAW…FLNF).

It belongs to the ELO family.

The protein resides in the membrane. Functionally, probable very long-chain fatty acid (VLCFA) elongase that controls VLCFA composition and functions to inhibit abscisic acid (ABA)-mediated stress responses, including regulation of stomatal aperture, maintenance of primary root growth and inhibition of germination. VLCFA pathway and products may function as signaling components acting upstream of sphingosine-1-phosphate, ceramide and the heterotrimeric G-protein complex, in lipid-mediated regulation of abiotic stress signaling. The polypeptide is Fatty acid elongase 3-like (HOS3) (Arabidopsis thaliana (Mouse-ear cress)).